Here is a 358-residue protein sequence, read N- to C-terminus: DNA polymerase IV (358 aa).

Residues 4-185 form the UmuC domain; the sequence is IIHVDMDCFY…LPLIKIPGVG (182 aa). Positions 8 and 103 each coordinate Mg(2+). The active site involves E104.

Belongs to the DNA polymerase type-Y family. Monomer. Mg(2+) serves as cofactor.

The protein resides in the cytoplasm. The catalysed reaction is DNA(n) + a 2'-deoxyribonucleoside 5'-triphosphate = DNA(n+1) + diphosphate. Its function is as follows. Poorly processive, error-prone DNA polymerase involved in untargeted mutagenesis. Copies undamaged DNA at stalled replication forks, which arise in vivo from mismatched or misaligned primer ends. These misaligned primers can be extended by PolIV. Exhibits no 3'-5' exonuclease (proofreading) activity. May be involved in translesional synthesis, in conjunction with the beta clamp from PolIII. In Shewanella pealeana (strain ATCC 700345 / ANG-SQ1), this protein is DNA polymerase IV.